The primary structure comprises 534 residues: Serine protease vicPa (534 aa).

Residues 1 to 17 (MLCYLLIHILCLQAVLG) form the signal peptide. N-linked (GlcNAc...) asparagine glycosylation is found at N65 and N126. The active-site Charge relay system is the S174. N-linked (GlcNAc...) asparagine glycosylation is found at N297, N416, and N436. D450 serves as the catalytic Charge relay system.

Belongs to the peptidase S28 family.

The protein operates within mycotoxin biosynthesis. Its function is as follows. Serine protease, part of the gene cluster that mediates the biosynthesis of the secondary metabolite victorin, the molecular basis for Victoria blight of oats. Within the pathway, vicPa and vicPb are probably involved in the processing of the vicA1 and vicA2 precursors. The pathway starts with the processing of the precursor vicA1 by several endopeptidases including kexin proteases as well as the cluster-specific S28 family peptidases vicPa and vicPb to produce 7 identical copies of the hexapeptide Gly-Leu-Lys-Leu-Ala-Phe. After being excised from the precursor peptide, the core peptides are cyclized and modified post-translationally by enzymes encoded within the gene cluster. The ustYa family oxidase vicYb is required for the formation of the macrocycle in victorin and the copper amine oxidases (CAOs) vicK1 and vicK2 are responsible for converting victorin to the active form by oxidizing the N-terminal glycyl residue in the peptides to glyoxylate. Relaxed substrate specificity of enzymes in the victorin biosynthetic pathway results in a metabolic grid that produces a set of analogs including victorinines B, C, E or HV-toxin M. The chain is Serine protease vicPa from Bipolaris victoriae (strain FI3) (Victoria blight of oats agent).